Here is a 336-residue protein sequence, read N- to C-terminus: Inositol 2-dehydrogenase (336 aa).

The protein belongs to the Gfo/Idh/MocA family. Homotetramer.

It catalyses the reaction myo-inositol + NAD(+) = scyllo-inosose + NADH + H(+). Functionally, involved in the oxidation of myo-inositol (MI) to 2-keto-myo-inositol (2KMI or 2-inosose). This chain is Inositol 2-dehydrogenase, found in Pseudomonas syringae pv. syringae (strain B728a).